The primary structure comprises 490 residues: Cytochrome P450 2C20 (490 aa).

C435 is a heme binding site.

This sequence belongs to the cytochrome P450 family. Heme serves as cofactor.

Its subcellular location is the endoplasmic reticulum membrane. The protein resides in the microsome membrane. It catalyses the reaction an organic molecule + reduced [NADPH--hemoprotein reductase] + O2 = an alcohol + oxidized [NADPH--hemoprotein reductase] + H2O + H(+). Cytochromes P450 are a group of heme-thiolate monooxygenases. In liver microsomes, this enzyme is involved in an NADPH-dependent electron transport pathway. It oxidizes a variety of structurally unrelated compounds, including steroids, fatty acids, and xenobiotics. This chain is Cytochrome P450 2C20 (CYP2C20), found in Macaca fascicularis (Crab-eating macaque).